A 344-amino-acid chain; its full sequence is KRR1 small subunit processome component homolog (344 aa).

Residues 126–194 form the KH domain; that stretch reads DIIKIGNLVH…VRDIVLDTMN (69 aa). The segment covering 230–246 has biased composition (basic residues); that stretch reads KNKNISKRKQPKNKKPK. Positions 230 to 326 are disordered; sequence KNKNISKRKQ…KRAAEDNKVD (97 aa). A coiled-coil region spans residues 271–344; the sequence is FLNKEQKQAK…MKANKKKERS (74 aa). A compositionally biased stretch (basic and acidic residues) spans 272-303; the sequence is LNKEQKQAKRQQERTAKQAEAAKKQDERRNKD.

Belongs to the KRR1 family. Monomer. Component of the ribosomal small subunit (SSU) processome.

The protein resides in the nucleus. It localises to the nucleolus. Functionally, required for 40S ribosome biogenesis. Involved in nucleolar processing of pre-18S ribosomal RNA and ribosome assembly. Binds to RNA. Required for female germline development, cell viability during eye development and for survival of dividing cells and epithelial cells during early wing disk development. This Drosophila mojavensis (Fruit fly) protein is KRR1 small subunit processome component homolog.